The primary structure comprises 445 residues: GTPase Der (445 aa).

2 EngA-type G domains span residues 3 to 167 (PVIA…YAGQ) and 180 to 353 (IKIA…AAAM). Residues 9–16 (GRPNVGKS), 56–60 (DTGGF), 119–122 (NKAE), 186–193 (GRPNVGKS), 233–237 (DTAGL), and 298–301 (NKWD) contribute to the GTP site. The 85-residue stretch at 354-438 (AKLPTPKLTR…PLRIEFRSSN (85 aa)) folds into the KH-like domain.

This sequence belongs to the TRAFAC class TrmE-Era-EngA-EngB-Septin-like GTPase superfamily. EngA (Der) GTPase family. In terms of assembly, associates with the 50S ribosomal subunit.

In terms of biological role, GTPase that plays an essential role in the late steps of ribosome biogenesis. This chain is GTPase Der, found in Burkholderia vietnamiensis (strain G4 / LMG 22486) (Burkholderia cepacia (strain R1808)).